Reading from the N-terminus, the 284-residue chain is Tropomyosin (284 aa).

Residues 1–284 are a coiled coil; the sequence is MDAIKKKMVA…DATFAELAGY (284 aa). Residues 32–41 show a composition bias toward basic and acidic residues; the sequence is TEEAKAKIED. The segment at 32 to 60 is disordered; the sequence is TEEAKAKIEDDYNSLQKKSIQTENDLDNT. Residues 44-60 are compositionally biased toward polar residues; that stretch reads NSLQKKSIQTENDLDNT.

Belongs to the tropomyosin family. In terms of assembly, homodimer.

Functionally, tropomyosin, in association with the troponin complex, plays a central role in the calcium dependent regulation of muscle contraction. The polypeptide is Tropomyosin (Mytilus edulis (Blue mussel)).